We begin with the raw amino-acid sequence, 728 residues long: Microtubule-associated protein VP5 (728 aa).

This sequence belongs to the reoviridae microtubule-associated protein family.

The protein resides in the virion. It is found in the host cytoplasm. Its subcellular location is the host cytoskeleton. Functionally, minor inner capsid component. Displays NTPase and RNA 5'-triphosphatase (RTPase) activities. May function as a cofactor of polymerase. Associates with microtubules and plays a role in the formation, structural organization and morphology of viral inclusions, where the assembly of cores and the replication of viral RNA occur. The polypeptide is Microtubule-associated protein VP5 (S5) (Ctenopharyngodon idella (Grass carp)).